Consider the following 914-residue polypeptide: Alanine--tRNA ligase (914 aa).

Residues histidine 613, histidine 617, cysteine 717, and histidine 721 each contribute to the Zn(2+) site.

Belongs to the class-II aminoacyl-tRNA synthetase family. The cofactor is Zn(2+).

It is found in the cytoplasm. It catalyses the reaction tRNA(Ala) + L-alanine + ATP = L-alanyl-tRNA(Ala) + AMP + diphosphate. Functionally, catalyzes the attachment of alanine to tRNA(Ala) in a two-step reaction: alanine is first activated by ATP to form Ala-AMP and then transferred to the acceptor end of tRNA(Ala). Also edits incorrectly charged Ser-tRNA(Ala) and Gly-tRNA(Ala) via its editing domain. The polypeptide is Alanine--tRNA ligase (Pyrococcus abyssi (strain GE5 / Orsay)).